A 720-amino-acid polypeptide reads, in one-letter code: Methionine--tRNA ligase (720 aa).

The 'HIGH' region signature appears at 27–37 (PYANGQIHIGH). Residues cysteine 158, cysteine 161, cysteine 171, and cysteine 174 each contribute to the Zn(2+) site. Residues 348–352 (KMSKS) carry the 'KMSKS' region motif. Lysine 351 contacts ATP. One can recognise a tRNA-binding domain in the interval 614-720 (DFAKVDLRIA…SGAKPGMRVK (107 aa)).

Belongs to the class-I aminoacyl-tRNA synthetase family. MetG type 1 subfamily. In terms of assembly, homodimer. The cofactor is Zn(2+).

It localises to the cytoplasm. It catalyses the reaction tRNA(Met) + L-methionine + ATP = L-methionyl-tRNA(Met) + AMP + diphosphate. In terms of biological role, is required not only for elongation of protein synthesis but also for the initiation of all mRNA translation through initiator tRNA(fMet) aminoacylation. This chain is Methionine--tRNA ligase, found in Burkholderia ambifaria (strain ATCC BAA-244 / DSM 16087 / CCUG 44356 / LMG 19182 / AMMD) (Burkholderia cepacia (strain AMMD)).